We begin with the raw amino-acid sequence, 570 residues long: MTEPIISFKDFSFQYHSQATPTLQNINVDIYPGEKVLVVGASGSGKSTFANCINGLIPFKTKGNVTGELHINNQDATVSCLHKRSNVVGTVLQDTDGQFIGLTAAEDMAFLLENNCVEQDDMKKNVSYWAEKVDMIEHLNHRPQDLSGGQKQRVSLGGILIHRTPILILDEPLANLDPATGHETLRLLNNIHEETKSTMIIVEHRLEESLDDTFDRVLLFKDGKIIANTTPSDLLKSSKLKEAGIREPLYCTALKYAEVDVESIDNLANLREVCMSEHVKFKVKKWIDKTSSNDDNKYKSEPLLELNEVCVQYSDYSNSVLNNVQLNVYRREMLSIVGHNGAGKSTLAKAICGFLDITGNIQFCNKGFNQLSISERSEFIGYVMQNPNHMISEKMIYDEVALGLRARGMKESDIKIRVENVLKICGLYAFRNWPIAALSYGQKKRVTIASVLVLNPEIIILDEPTAGQDFYHYNEIMSFLIELNRQGKTIIMITHDMHLLSEYSSRTVVLSKGQVVADTTPVLVLNDKKICEIASLRQTSLFEMAEYIGISEPQKLIQLFINHDRKVRRQ.

2 consecutive ABC transporter domains span residues 6–247 (ISFK…GIRE) and 304–537 (LELN…ASLR). ATP-binding positions include 40–47 (GASGSGKS) and 338–345 (GHNGAGKS).

This sequence belongs to the ABC transporter superfamily.

Its subcellular location is the cell membrane. Functionally, probably part of an ABC transporter complex. Responsible for energy coupling to the transport system. In Staphylococcus aureus (strain MRSA252), this protein is Putative ABC transporter ATP-binding protein SAR2766.